The following is a 413-amino-acid chain: Palmitoyltransferase ZDHHC6 (413 aa).

The Cytoplasmic portion of the chain corresponds to 1–24; the sequence is MGTFCSVIKFENLQELKRLCHWGP. A helical membrane pass occupies residues 25–45; the sequence is IIALGVIAICSTMAMIDSVLW. The Lumenal segment spans residues 46–57; it reads YWPLHTTGGSVN. The chain crosses the membrane as a helical span at residues 58–78; sequence FIMLINWTVMILYNYFNAMFV. The Cytoplasmic portion of the chain corresponds to 79–143; sequence GPGFVPLGWK…NCCGYQNHAS (65 aa). One can recognise a DHHC domain in the interval 99-149; the sequence is QYCKVCQAYKAPRSHHCRKCNRCVMKMDHHCPWINNCCGYQNHASFTLFLL. Cys129 (S-palmitoyl cysteine intermediate) is an active-site residue. A helical membrane pass occupies residues 144-164; it reads FTLFLLLAPLGCIHAAFIFVM. Over 165 to 205 the chain is Lumenal; it reads TMYTQLYHRLSFGWNTVKIDMSAARRDPLPIVPFGLAAFAT. A helical membrane pass occupies residues 206–226; it reads TLFALGLALGTTIAVGMLFFI. The Cytoplasmic segment spans residues 227–413; the sequence is QMKIILRNKT…QAPEGEKKNR (187 aa). The SH3 domain occupies 313-398; that stretch reads VRSVRYKVIE…PRKCVEKCPC (86 aa). 3 S-palmitoyl cysteine lipidation sites follow: Cys328, Cys329, and Cys343. The short motif at 410-413 is the Di-lysine motif element; it reads KKNR.

It belongs to the DHHC palmitoyltransferase family. As to quaternary structure, homooligomerizes. Interacts with SELENOK. Post-translationally, palmitoylated at 3 different sites by ZDHHC16. The combination of the different palmitoylation events strongly affects the quaternary assembly of ZDHHC6, its localization, stability and function. Palmitoylation at Cys-328 accelerates the turnover of ZDHHC6. Depalmitoylated by LYPLA2.

The protein resides in the endoplasmic reticulum membrane. It carries out the reaction L-cysteinyl-[protein] + hexadecanoyl-CoA = S-hexadecanoyl-L-cysteinyl-[protein] + CoA. The enzyme catalyses L-cysteinyl-[protein] + octadecanoyl-CoA = S-octadecanoyl-L-cysteinyl-[protein] + CoA. Functionally, endoplasmic reticulum palmitoyl acyltransferase that mediates palmitoylation of proteins such as AMFR, CALX, ITPR1 and TFRC. Palmitoylates calnexin (CALX), which is required for its association with the ribosome-translocon complex and efficient folding of glycosylated proteins. Mediates palmitoylation of AMFR, promoting AMFR distribution to the peripheral endoplasmic reticulum. Together with SELENOK, palmitoylates ITPR1 in immune cells, leading to regulate ITPR1 stability and function. Stearoyltransferase that mediates stearoylation of TFRC to inhibit TFRC-mediated activation of the JNK pathway and mitochondrial fragmentation. The sequence is that of Palmitoyltransferase ZDHHC6 from Homo sapiens (Human).